A 61-amino-acid polypeptide reads, in one-letter code: Beta-toxin Tce4 (61 aa).

Positions K1–C61 constitute an LCN-type CS-alpha/beta domain. 4 disulfides stabilise this stretch: C11–C61, C15–C37, C23–C42, and C27–C44. C61 carries the cysteine amide modification.

Belongs to the long (4 C-C) scorpion toxin superfamily. Sodium channel inhibitor family. Beta subfamily. As to expression, expressed by the venom gland.

Its subcellular location is the secreted. Its function is as follows. Beta toxins bind voltage-independently at site-4 of sodium channels (Nav) and shift the voltage of activation toward more negative potentials thereby affecting sodium channel activation and promoting spontaneous and repetitive firing. In Tityus cerroazul (Scorpion), this protein is Beta-toxin Tce4.